Consider the following 151-residue polypeptide: uncharacterized protein (151 aa).

3 consecutive 4Fe-4S ferredoxin-type domains span residues 4–32, 33–63, and 64–93; these read KIIV…ESRV, RKVD…YLKD, and GIPI…IKNR. [4Fe-4S] cluster-binding residues include cysteine 13, cysteine 16, cysteine 19, cysteine 23, cysteine 42, cysteine 45, cysteine 50, cysteine 54, cysteine 73, cysteine 76, cysteine 79, cysteine 83, cysteine 98, cysteine 101, cysteine 111, and cysteine 115.

The cofactor is [4Fe-4S] cluster.

This is an uncharacterized protein from Methanocaldococcus jannaschii (strain ATCC 43067 / DSM 2661 / JAL-1 / JCM 10045 / NBRC 100440) (Methanococcus jannaschii).